The sequence spans 710 residues: Phosphoribosylformylglycinamidine synthase subunit PurL (710 aa).

Residue H36 is part of the active site. 2 residues coordinate ATP: Y39 and K80. E82 is a Mg(2+) binding site. Residues 83 to 86 (SHNH) and R105 each bind substrate. Residue H84 is the Proton acceptor of the active site. Residue D106 participates in Mg(2+) binding. Residue Q226 coordinates substrate. D252 contributes to the Mg(2+) binding site. 294 to 296 (ETQ) contributes to the substrate binding site. ATP-binding residues include D470 and G507. S510 contributes to the substrate binding site.

The protein belongs to the FGAMS family. Monomer. Part of the FGAM synthase complex composed of 1 PurL, 1 PurQ and 2 PurS subunits.

It is found in the cytoplasm. The enzyme catalyses N(2)-formyl-N(1)-(5-phospho-beta-D-ribosyl)glycinamide + L-glutamine + ATP + H2O = 2-formamido-N(1)-(5-O-phospho-beta-D-ribosyl)acetamidine + L-glutamate + ADP + phosphate + H(+). It participates in purine metabolism; IMP biosynthesis via de novo pathway; 5-amino-1-(5-phospho-D-ribosyl)imidazole from N(2)-formyl-N(1)-(5-phospho-D-ribosyl)glycinamide: step 1/2. In terms of biological role, part of the phosphoribosylformylglycinamidine synthase complex involved in the purines biosynthetic pathway. Catalyzes the ATP-dependent conversion of formylglycinamide ribonucleotide (FGAR) and glutamine to yield formylglycinamidine ribonucleotide (FGAM) and glutamate. The FGAM synthase complex is composed of three subunits. PurQ produces an ammonia molecule by converting glutamine to glutamate. PurL transfers the ammonia molecule to FGAR to form FGAM in an ATP-dependent manner. PurS interacts with PurQ and PurL and is thought to assist in the transfer of the ammonia molecule from PurQ to PurL. This Sulfolobus acidocaldarius (strain ATCC 33909 / DSM 639 / JCM 8929 / NBRC 15157 / NCIMB 11770) protein is Phosphoribosylformylglycinamidine synthase subunit PurL.